The primary structure comprises 185 residues: MQSTRKTNQLAIPDLSGKVTIGDLLEAFSSYEKEIISIKLSKQRRSRDEDLKVGYVEFETVEDTEKAYGEGSVKVAGEAKALHYAKRKDQRMKERVIVSSKKVYISGIPEDTDKDELSALLGNCRISGGDKGKNYLFAEYDNSEEQERALSKINNMKIKGSKLFAMPAYEKANIGRIGRRKGDFN.

RRM domains are found at residues 8-87 (NQLA…YAKR) and 101-170 (KKVY…PAYE).

The polypeptide is RRM domain-containing protein ECU09_1470 (Encephalitozoon cuniculi (strain GB-M1) (Microsporidian parasite)).